We begin with the raw amino-acid sequence, 478 residues long: ATP-dependent DNA helicase RecQ (478 aa).

The Helicase ATP-binding domain maps to 28-202 (IDCLLARRDC…VEGLNLRSPE (175 aa)). 41 to 48 (LPTGGGKS) provides a ligand contact to ATP. A DEAH box motif is present at residues 142–145 (DEAH). Residues 229 to 380 (QLRRFLLKHL…RAEVLSQQIP (152 aa)) form the Helicase C-terminal domain. Zn(2+)-binding residues include C447, C467, C470, and C473.

The protein belongs to the helicase family. RecQ subfamily. The cofactor is Mg(2+). It depends on Zn(2+) as a cofactor.

The catalysed reaction is Couples ATP hydrolysis with the unwinding of duplex DNA by translocating in the 3'-5' direction.. It catalyses the reaction ATP + H2O = ADP + phosphate + H(+). In terms of biological role, an ATP-dependent DNA helicase which unwinds DNA in a 3'-5' direction. The sequence is that of ATP-dependent DNA helicase RecQ from Synechocystis sp. (strain ATCC 27184 / PCC 6803 / Kazusa).